Here is a 448-residue protein sequence, read N- to C-terminus: Argininosuccinate synthase (448 aa).

ATP is bound by residues 17–25 (AFSGGLDTS) and alanine 43. Tyrosine 99 serves as a coordination point for L-citrulline. Residues glycine 129 and threonine 131 each coordinate ATP. The L-aspartate site is built by threonine 131, asparagine 135, and aspartate 136. An L-citrulline-binding site is contributed by asparagine 135. Aspartate 136 contacts ATP. Residues arginine 139 and serine 192 each contribute to the L-citrulline site. Aspartate 194 is an ATP binding site. Positions 201, 203, and 280 each coordinate L-citrulline.

This sequence belongs to the argininosuccinate synthase family. Type 2 subfamily. Homotetramer.

The protein resides in the cytoplasm. It catalyses the reaction L-citrulline + L-aspartate + ATP = 2-(N(omega)-L-arginino)succinate + AMP + diphosphate + H(+). Its pathway is amino-acid biosynthesis; L-arginine biosynthesis; L-arginine from L-ornithine and carbamoyl phosphate: step 2/3. This Pectobacterium carotovorum subsp. carotovorum (strain PC1) protein is Argininosuccinate synthase.